The primary structure comprises 311 residues: Pyrimidine-specific ribonucleoside hydrolase RihA (311 aa).

Histidine 240 is a catalytic residue.

It belongs to the IUNH family. RihA subfamily.

Its function is as follows. Hydrolyzes with equal efficiency cytidine or uridine to ribose and cytosine or uracil, respectively. The protein is Pyrimidine-specific ribonucleoside hydrolase RihA of Escherichia coli (strain ATCC 8739 / DSM 1576 / NBRC 3972 / NCIMB 8545 / WDCM 00012 / Crooks).